The sequence spans 162 residues: NADPH-dependent 7-cyano-7-deazaguanine reductase (162 aa).

Cys53 acts as the Thioimide intermediate in catalysis. Asp60 functions as the Proton donor in the catalytic mechanism. Substrate is bound by residues 75-77 and 94-95; these read VES and HE.

The protein belongs to the GTP cyclohydrolase I family. QueF type 1 subfamily.

The protein resides in the cytoplasm. It catalyses the reaction 7-aminomethyl-7-carbaguanine + 2 NADP(+) = 7-cyano-7-deazaguanine + 2 NADPH + 3 H(+). It participates in tRNA modification; tRNA-queuosine biosynthesis. Catalyzes the NADPH-dependent reduction of 7-cyano-7-deazaguanine (preQ0) to 7-aminomethyl-7-deazaguanine (preQ1). This is NADPH-dependent 7-cyano-7-deazaguanine reductase from Exiguobacterium sp. (strain ATCC BAA-1283 / AT1b).